The sequence spans 576 residues: Phosphoenolpyruvate-protein phosphotransferase (576 aa).

Histidine 189 functions as the Tele-phosphohistidine intermediate in the catalytic mechanism. Residues arginine 296 and arginine 332 each contribute to the phosphoenolpyruvate site. Mg(2+) is bound by residues glutamate 431 and aspartate 455. Residues 454–455 and arginine 465 each bind phosphoenolpyruvate; that span reads ND. The Proton donor role is filled by cysteine 502.

This sequence belongs to the PEP-utilizing enzyme family. Homodimer. The cofactor is Mg(2+).

The protein localises to the cytoplasm. The catalysed reaction is L-histidyl-[protein] + phosphoenolpyruvate = N(pros)-phospho-L-histidyl-[protein] + pyruvate. In terms of biological role, general (non sugar-specific) component of the phosphoenolpyruvate-dependent sugar phosphotransferase system (sugar PTS). This major carbohydrate active-transport system catalyzes the phosphorylation of incoming sugar substrates concomitantly with their translocation across the cell membrane. Enzyme I transfers the phosphoryl group from phosphoenolpyruvate (PEP) to the phosphoryl carrier protein (HPr). The sequence is that of Phosphoenolpyruvate-protein phosphotransferase (ptsI) from Buchnera aphidicola subsp. Baizongia pistaciae (strain Bp).